Here is a 267-residue protein sequence, read N- to C-terminus: 4-hydroxy-tetrahydrodipicolinate reductase (267 aa).

Residues 12–17 (GPRGRM), 100–102 (GTT), and 126–129 (APNF) each bind NAD(+). The active-site Proton donor/acceptor is histidine 156. Position 157 (histidine 157) interacts with (S)-2,3,4,5-tetrahydrodipicolinate. The active-site Proton donor is the lysine 160. (S)-2,3,4,5-tetrahydrodipicolinate is bound at residue 166 to 167 (GT).

The protein belongs to the DapB family.

It localises to the cytoplasm. It carries out the reaction (S)-2,3,4,5-tetrahydrodipicolinate + NAD(+) + H2O = (2S,4S)-4-hydroxy-2,3,4,5-tetrahydrodipicolinate + NADH + H(+). The catalysed reaction is (S)-2,3,4,5-tetrahydrodipicolinate + NADP(+) + H2O = (2S,4S)-4-hydroxy-2,3,4,5-tetrahydrodipicolinate + NADPH + H(+). It participates in amino-acid biosynthesis; L-lysine biosynthesis via DAP pathway; (S)-tetrahydrodipicolinate from L-aspartate: step 4/4. In terms of biological role, catalyzes the conversion of 4-hydroxy-tetrahydrodipicolinate (HTPA) to tetrahydrodipicolinate. The chain is 4-hydroxy-tetrahydrodipicolinate reductase from Bacillus subtilis (strain 168).